Consider the following 538-residue polypeptide: Calcium-dependent protein kinase 32 (538 aa).

The segment at 1-37 (MGNCCGTAGSLAQNDNKPKKGRKKQNPFSIDYGLHHG) is disordered. Glycine 2 carries the N-myristoyl glycine lipid modification. The 259-residue stretch at 63–321 (YTLGRELGRG…AQQVLDHPWL (259 aa)) folds into the Protein kinase domain. ATP-binding positions include 69–77 (LGRGEFGVT) and lysine 92. The Proton acceptor role is filled by aspartate 187. Residue serine 227 is modified to Phosphoserine. The interval 327 to 357 (APNVSLGETVRARLKQFTVMNKLKKRALRVI) is autoinhibitory domain. EF-hand domains are found at residues 364-399 (EEAS…LGHA), 400-435 (IPQD…LRKM), 436-470 (GNDE…DELG), and 471-506 (TSEE…GTDW). The Ca(2+) site is built by aspartate 377, serine 379, lysine 383, glutamate 388, aspartate 413, aspartate 415, aspartate 417, tyrosine 419, glutamate 424, aspartate 449, asparagine 451, asparagine 453, tyrosine 455, glutamate 460, aspartate 484, aspartate 486, aspartate 488, and arginine 490. A Phosphoserine modification is found at serine 492. Residue glutamate 495 coordinates Ca(2+).

It belongs to the protein kinase superfamily. Ser/Thr protein kinase family. CDPK subfamily. As to quaternary structure, interacts with ABF4. Interacts with CNGC18. As to expression, expressed in embryos and most of the vegetative tissues.

The protein resides in the nucleus. Its subcellular location is the membrane. It carries out the reaction L-seryl-[protein] + ATP = O-phospho-L-seryl-[protein] + ADP + H(+). It catalyses the reaction L-threonyl-[protein] + ATP = O-phospho-L-threonyl-[protein] + ADP + H(+). With respect to regulation, activated by calcium. Autophosphorylation may play an important role in the regulation of the kinase activity. Its function is as follows. May play a role in signal transduction pathways that involve calcium as a second messenger. Involved in maintaining Ca2+ homeostasis in pollen tube tips by regulating CNGC18. Functions as regulator of the calcium-mediated abscisic acid (ABA) signaling pathway. Phosphorylates ABA-responsive transcription factor ABF4 in vitro. The protein is Calcium-dependent protein kinase 32 of Arabidopsis thaliana (Mouse-ear cress).